The chain runs to 362 residues: Phosphoserine aminotransferase (362 aa).

Serine 9 and arginine 42 together coordinate L-glutamate. Pyridoxal 5'-phosphate contacts are provided by residues 76-77, tryptophan 102, threonine 153, aspartate 174, and glutamine 197; that span reads GR. Lysine 198 is subject to N6-(pyridoxal phosphate)lysine. A pyridoxal 5'-phosphate-binding site is contributed by 239 to 240; that stretch reads NT.

The protein belongs to the class-V pyridoxal-phosphate-dependent aminotransferase family. SerC subfamily. As to quaternary structure, homodimer. Pyridoxal 5'-phosphate serves as cofactor.

The protein resides in the cytoplasm. It catalyses the reaction O-phospho-L-serine + 2-oxoglutarate = 3-phosphooxypyruvate + L-glutamate. The enzyme catalyses 4-(phosphooxy)-L-threonine + 2-oxoglutarate = (R)-3-hydroxy-2-oxo-4-phosphooxybutanoate + L-glutamate. Its pathway is amino-acid biosynthesis; L-serine biosynthesis; L-serine from 3-phospho-D-glycerate: step 2/3. It participates in cofactor biosynthesis; pyridoxine 5'-phosphate biosynthesis; pyridoxine 5'-phosphate from D-erythrose 4-phosphate: step 3/5. In terms of biological role, catalyzes the reversible conversion of 3-phosphohydroxypyruvate to phosphoserine and of 3-hydroxy-2-oxo-4-phosphonooxybutanoate to phosphohydroxythreonine. This chain is Phosphoserine aminotransferase, found in Escherichia coli O7:K1 (strain IAI39 / ExPEC).